The chain runs to 238 residues: Splicing regulator RBM11 (238 aa).

An RRM domain is found at 10-87 (RTVFVGNLEA…RPINVQYRFG (78 aa)). Positions 172 to 238 (ALNHSPGPEA…CRKCKKKKRY (67 aa)) are disordered. The Bipartite nuclear localization signal motif lies at 202–237 (NKRKRQRPDSDSDSSSEDKRGNEGSQKCRKCKKKKR). The span at 228–238 (KCRKCKKKKRY) shows a compositional bias: basic residues.

As to quaternary structure, homodimer. As to expression, selectively expressed in brain, cerebellum and testis, and to a lower extent in kidney.

The protein localises to the nucleus. The protein resides in the nucleoplasm. Its subcellular location is the nucleus speckle. Its function is as follows. Tissue-specific splicing factor with potential implication in the regulation of alternative splicing during neuron and germ cell differentiation. Antagonizes SRSF1-mediated BCL-X splicing. May affect the choice of alternative 5' splice sites by binding to specific sequences in exons and antagonizing the SR protein SRSF1. The chain is Splicing regulator RBM11 (Rbm11) from Mus musculus (Mouse).